The following is a 949-amino-acid chain: Bifunctional uridylyltransferase/uridylyl-removing enzyme (949 aa).

The interval 1–377 (MARHETSFPE…RFRNRVRKIA (377 aa)) is uridylyltransferase. Residues 378–733 (GTLDFVDDGG…VRTHDFHAIT (356 aa)) are uridylyl-removing. One can recognise an HD domain in the interval 494–610 (VDEHLLRSVD…VDFAERVQSL (117 aa)). 2 consecutive ACT domains span residues 734–816 (EITV…VIAS) and 845–926 (VIEV…ERMP). The segment at 926-949 (PSGIIAPTPVSRVPHGSKTTKAET) is disordered.

The protein belongs to the GlnD family. Mg(2+) is required as a cofactor.

The catalysed reaction is [protein-PII]-L-tyrosine + UTP = [protein-PII]-uridylyl-L-tyrosine + diphosphate. It catalyses the reaction [protein-PII]-uridylyl-L-tyrosine + H2O = [protein-PII]-L-tyrosine + UMP + H(+). With respect to regulation, uridylyltransferase (UTase) activity is inhibited by glutamine, while glutamine activates uridylyl-removing (UR) activity. Modifies, by uridylylation and deuridylylation, the PII regulatory proteins (GlnB and homologs), in response to the nitrogen status of the cell that GlnD senses through the glutamine level. Under low glutamine levels, catalyzes the conversion of the PII proteins and UTP to PII-UMP and PPi, while under higher glutamine levels, GlnD hydrolyzes PII-UMP to PII and UMP (deuridylylation). Thus, controls uridylylation state and activity of the PII proteins, and plays an important role in the regulation of nitrogen fixation and metabolism. The polypeptide is Bifunctional uridylyltransferase/uridylyl-removing enzyme (Rhizobium meliloti (strain 1021) (Ensifer meliloti)).